Consider the following 359-residue polypeptide: UPF0283 membrane protein R01807 (359 aa).

Helical transmembrane passes span Phe76–Ile96 and Trp109–Val129.

Belongs to the UPF0283 family.

The protein localises to the cell inner membrane. The sequence is that of UPF0283 membrane protein R01807 from Rhizobium meliloti (strain 1021) (Ensifer meliloti).